The sequence spans 404 residues: Glycosylated lysosomal membrane protein (404 aa).

The first 26 residues, 1–26 (MSGYEKPSRGWGFCALSPVLLSLLMA), serve as a signal peptide directing secretion. Residues 27 to 370 (APLGLLGEET…VDALSPLVLG (344 aa)) lie on the Lumenal side of the membrane. N-linked (GlcNAc...) asparagine glycans are attached at residues N63, N132, N157, N185, and N228. A helical transmembrane segment spans residues 371 to 391 (IMAVALGAPALMLLAGGLFLL). Residues 392–404 (LGRKRDSEYQSIN) lie on the Cytoplasmic side of the membrane. A Lysosomal targeting motif motif is present at residues 400-404 (YQSIN).

Belongs to the GLMP family. In terms of assembly, interacts (via lumenal domain) with lysosomal protein MFSD1; the interaction starts while both proteins are still in the endoplasmic reticulum and is required for stabilization of MFSD1 in lysosomes but has no direct effect on its targeting to lysosomes or transporter activity. Post-translationally, highly N-glycosylated. N-glycosylation is essential for GLMP stability and for MFSD1 lysosomal localization.

Its subcellular location is the lysosome membrane. In terms of biological role, required to protect lysosomal transporter MFSD1 from lysosomal proteolysis and for MFSD1 lysosomal localization. The sequence is that of Glycosylated lysosomal membrane protein from Bos taurus (Bovine).